Reading from the N-terminus, the 422-residue chain is UDP-N-acetylglucosamine 1-carboxyvinyltransferase (422 aa).

22–23 (KN) contributes to the phosphoenolpyruvate binding site. Arg-93 contributes to the UDP-N-acetyl-alpha-D-glucosamine binding site. Cys-117 acts as the Proton donor in catalysis. At Cys-117 the chain carries 2-(S-cysteinyl)pyruvic acid O-phosphothioketal. UDP-N-acetyl-alpha-D-glucosamine-binding positions include 122 to 126 (RPVDL), Asp-308, and Leu-330.

It belongs to the EPSP synthase family. MurA subfamily.

It localises to the cytoplasm. It catalyses the reaction phosphoenolpyruvate + UDP-N-acetyl-alpha-D-glucosamine = UDP-N-acetyl-3-O-(1-carboxyvinyl)-alpha-D-glucosamine + phosphate. Its pathway is cell wall biogenesis; peptidoglycan biosynthesis. Functionally, cell wall formation. Adds enolpyruvyl to UDP-N-acetylglucosamine. This chain is UDP-N-acetylglucosamine 1-carboxyvinyltransferase, found in Helicobacter pylori (strain HPAG1).